We begin with the raw amino-acid sequence, 141 residues long: 6,7-dimethyl-8-ribityllumazine synthase (141 aa).

5-amino-6-(D-ribitylamino)uracil is bound by residues Phe13, 45–47 (SFE), and 69–71 (AII). Residue 74 to 75 (DT) coordinates (2S)-2-hydroxy-3-oxobutyl phosphate. His77 acts as the Proton donor in catalysis. Leu102 is a binding site for 5-amino-6-(D-ribitylamino)uracil. Arg117 serves as a coordination point for (2S)-2-hydroxy-3-oxobutyl phosphate.

It belongs to the DMRL synthase family.

It catalyses the reaction (2S)-2-hydroxy-3-oxobutyl phosphate + 5-amino-6-(D-ribitylamino)uracil = 6,7-dimethyl-8-(1-D-ribityl)lumazine + phosphate + 2 H2O + H(+). The protein operates within cofactor biosynthesis; riboflavin biosynthesis; riboflavin from 2-hydroxy-3-oxobutyl phosphate and 5-amino-6-(D-ribitylamino)uracil: step 1/2. Catalyzes the formation of 6,7-dimethyl-8-ribityllumazine by condensation of 5-amino-6-(D-ribitylamino)uracil with 3,4-dihydroxy-2-butanone 4-phosphate. This is the penultimate step in the biosynthesis of riboflavin. The sequence is that of 6,7-dimethyl-8-ribityllumazine synthase from Methanopyrus kandleri (strain AV19 / DSM 6324 / JCM 9639 / NBRC 100938).